The primary structure comprises 508 residues: Photosystem II CP47 reaction center protein (508 aa).

6 helical membrane-spanning segments follow: residues 21–36, 101–115, 140–156, 203–218, 237–252, and 457–472; these read SVHI…WAGS, IVFS…IWHW, GIHL…FGAF, IAAG…FHLS, VLSS…AFVV, and SFAL…HGAR.

It belongs to the PsbB/PsbC family. PsbB subfamily. As to quaternary structure, PSII is composed of 1 copy each of membrane proteins PsbA, PsbB, PsbC, PsbD, PsbE, PsbF, PsbH, PsbI, PsbJ, PsbK, PsbL, PsbM, PsbT, PsbX, PsbY, PsbZ, Psb30/Ycf12, at least 3 peripheral proteins of the oxygen-evolving complex and a large number of cofactors. It forms dimeric complexes. Binds multiple chlorophylls. PSII binds additional chlorophylls, carotenoids and specific lipids. is required as a cofactor.

Its subcellular location is the plastid. It localises to the chloroplast thylakoid membrane. Its function is as follows. One of the components of the core complex of photosystem II (PSII). It binds chlorophyll and helps catalyze the primary light-induced photochemical processes of PSII. PSII is a light-driven water:plastoquinone oxidoreductase, using light energy to abstract electrons from H(2)O, generating O(2) and a proton gradient subsequently used for ATP formation. This is Photosystem II CP47 reaction center protein from Nuphar advena (Common spatterdock).